A 515-amino-acid polypeptide reads, in one-letter code: Alpha,alpha-trehalose-phosphate synthase [UDP-forming] 1 (515 aa).

D-glucose 6-phosphate contacts are provided by Tyr97 and Asp151. UDP is bound by residues Arg287 and Lys292. UDP-alpha-D-glucose-binding residues include Arg287 and Lys292. A D-glucose 6-phosphate-binding site is contributed by Arg325. UDP-binding positions include Val364 and 390 to 394; that span reads LVAYE. 386–394 is a binding site for UDP-alpha-D-glucose; the sequence is DGMNLVAYE. Residues 483–515 are disordered; sequence GKFQSRKAKLPESADAEKPMNGSGESEESQTTQ. The segment covering 491–500 has biased composition (basic and acidic residues); sequence KLPESADAEK.

The protein belongs to the glycosyltransferase 20 family.

It catalyses the reaction D-glucose 6-phosphate + UDP-alpha-D-glucose = alpha,alpha-trehalose 6-phosphate + UDP + H(+). Its pathway is carbohydrate biosynthesis. Functionally, synthase catalytic subunit of the trehalose synthase complex that catalyzes the production of trehalose from glucose-6-phosphate and UDP-alpha-D-glucose in a two step process. The disaccharide trehalose serves as a storage carbohydrate that is mobilized during conidial germination. Regulates the level of trehalose as a protectant for cell integrity during thermal and oxidative stress. This Aspergillus fumigatus (strain ATCC MYA-4609 / CBS 101355 / FGSC A1100 / Af293) (Neosartorya fumigata) protein is Alpha,alpha-trehalose-phosphate synthase [UDP-forming] 1.